Here is a 237-residue protein sequence, read N- to C-terminus: Ubiquinone biosynthesis O-methyltransferase (237 aa).

4 residues coordinate S-adenosyl-L-methionine: R38, G58, D79, and M124.

The protein belongs to the methyltransferase superfamily. UbiG/COQ3 family.

The catalysed reaction is a 3-demethylubiquinol + S-adenosyl-L-methionine = a ubiquinol + S-adenosyl-L-homocysteine + H(+). The enzyme catalyses a 3-(all-trans-polyprenyl)benzene-1,2-diol + S-adenosyl-L-methionine = a 2-methoxy-6-(all-trans-polyprenyl)phenol + S-adenosyl-L-homocysteine + H(+). Its pathway is cofactor biosynthesis; ubiquinone biosynthesis. In terms of biological role, O-methyltransferase that catalyzes the 2 O-methylation steps in the ubiquinone biosynthetic pathway. The chain is Ubiquinone biosynthesis O-methyltransferase from Acinetobacter baumannii (strain ACICU).